A 220-amino-acid chain; its full sequence is ATP phosphoribosyltransferase (220 aa).

The protein belongs to the ATP phosphoribosyltransferase family. Short subfamily. As to quaternary structure, heteromultimer composed of HisG and HisZ subunits.

The protein resides in the cytoplasm. It carries out the reaction 1-(5-phospho-beta-D-ribosyl)-ATP + diphosphate = 5-phospho-alpha-D-ribose 1-diphosphate + ATP. It participates in amino-acid biosynthesis; L-histidine biosynthesis; L-histidine from 5-phospho-alpha-D-ribose 1-diphosphate: step 1/9. Catalyzes the condensation of ATP and 5-phosphoribose 1-diphosphate to form N'-(5'-phosphoribosyl)-ATP (PR-ATP). Has a crucial role in the pathway because the rate of histidine biosynthesis seems to be controlled primarily by regulation of HisG enzymatic activity. The polypeptide is ATP phosphoribosyltransferase (Prochlorococcus marinus (strain NATL1A)).